The chain runs to 225 residues: Ribonuclease 3 (225 aa).

The RNase III domain maps to 5–127 (LERLQRQIGY…IIGAISLDSD (123 aa)). Residue E40 participates in Mg(2+) binding. Residue D44 is part of the active site. The Mg(2+) site is built by D113 and E116. E116 is a catalytic residue. Residues 154–224 (DPKTRLQEYL…AEKILQLLEM (71 aa)) enclose the DRBM domain.

The protein belongs to the ribonuclease III family. Homodimer. Mg(2+) serves as cofactor.

The protein resides in the cytoplasm. It catalyses the reaction Endonucleolytic cleavage to 5'-phosphomonoester.. Its function is as follows. Digests double-stranded RNA. Involved in the processing of primary rRNA transcript to yield the immediate precursors to the large and small rRNAs (23S and 16S). Also processes some mRNAs, and tRNAs when they are encoded in the rRNA operon. CRISPR (clustered regularly interspaced short palindromic repeat) is an adaptive immune system that provides protection against mobile genetic elements (viruses, transposable elements and conjugative plasmids). CRISPR clusters contain spacers, sequences complementary to antecedent mobile elements, and target invading nucleic acids. CRISPR clusters are transcribed and processed into CRISPR RNA (crRNA). In this organism endogenous ribonuclease 3 and Cas9 are required for correct coprocessing of pre-crRNA and the trans-encoded small RNA (tracrRNA). Cas9, crRNA and tracrRNA are required for cleavage of invading DNA. Complements pre-crRNA and tracrRNA coprocessing defects in an rnc deletion in S.pyogenes strain 370. This chain is Ribonuclease 3, found in Pasteurella multocida (strain Pm70).